A 573-amino-acid polypeptide reads, in one-letter code: MRTENTATLNLIWGALILEELARIGVQHVCMAPGSRSTPLTLAAAQQTKLKRHLHFDERGLGFMALGLAKASRAPVAIITTSGTAVANLYPAIVEAWLTHVPLIVLSGDRPPELLDCGANQAIVQPGIFAHYAKQINLPTPDAHIAPQALLTTIDEAVANQTRPVHINCMYREPLYPSELGVPILDTESPYLKPLQTWLQLSRPYTQYGKYKQVSNPSDDAIMRFVHGKGVIVAGTLTPEQDPQQLIALSQKIGWPLLTDAQSQLRQHPAAIGNIDQLLQHPKARNLLQEADRVLVFGGRLLSKRLISYLAEQHWHSYWQVLPEQNRLDPSHNAKHVWHANAAQFAALNWYRSSSANWANTLITYNDELHNLFVRNIDHGEFGEAQVVRAIANTRPLEQQLFIGNSLPVRLYDMYAPVSCCTATTYTNRGASGIDGLLATACGLAAHEGKPTSLIIGDLSQLHDLNSLAIAKSLASPLVIVILNNDGGNIFNLLPVPNEQVRNDYYRLSHGLEFGYAAAMFNLPYNQVDNLADFQDSYNEALDFQGASIIEVNVSQTQASDQIAELNLWVKQS.

It belongs to the TPP enzyme family. MenD subfamily. Homodimer. The cofactor is Mg(2+). Mn(2+) serves as cofactor. It depends on thiamine diphosphate as a cofactor.

The catalysed reaction is isochorismate + 2-oxoglutarate + H(+) = 5-enolpyruvoyl-6-hydroxy-2-succinyl-cyclohex-3-ene-1-carboxylate + CO2. It functions in the pathway quinol/quinone metabolism; 1,4-dihydroxy-2-naphthoate biosynthesis; 1,4-dihydroxy-2-naphthoate from chorismate: step 2/7. It participates in quinol/quinone metabolism; menaquinone biosynthesis. Its function is as follows. Catalyzes the thiamine diphosphate-dependent decarboxylation of 2-oxoglutarate and the subsequent addition of the resulting succinic semialdehyde-thiamine pyrophosphate anion to isochorismate to yield 2-succinyl-5-enolpyruvyl-6-hydroxy-3-cyclohexene-1-carboxylate (SEPHCHC). The chain is 2-succinyl-5-enolpyruvyl-6-hydroxy-3-cyclohexene-1-carboxylate synthase from Shewanella putrefaciens (strain CN-32 / ATCC BAA-453).